A 342-amino-acid chain; its full sequence is Platelet-activating factor receptor (342 aa).

Topologically, residues 1-16 (MELNSSSRVDSEFRYT) are extracellular. An N-linked (GlcNAc...) asparagine glycan is attached at Asn4. The helical transmembrane segment at 17–38 (LFPIVYSIIFVLGIIANGYVLW) threads the bilayer. Over 39 to 54 (VFARLYPSKKLNEIKI) the chain is Cytoplasmic. The helical transmembrane segment at 55–74 (FMVNLTVADLLFLITLPLWI) threads the bilayer. At 75–91 (VYYSNQGNWFLPKFLCN) the chain is on the extracellular side. Cys90 and Cys173 are oxidised to a cystine. The chain crosses the membrane as a helical span at residues 92–113 (LAGCLFFINTYCSVAFLGVITY). Over 114 to 133 (NRFQAVKYPIKTAQATTRKR) the chain is Cytoplasmic. The helical transmembrane segment at 134–155 (GIALSLVIWVAIVAAASYFLVM) threads the bilayer. Over 156-184 (DSTNVVSNKAGSGNITRCFEHYEKGSKPV) the chain is Extracellular. A glycan (N-linked (GlcNAc...) asparagine) is linked at Asn169. The helical transmembrane segment at 185–205 (LIIHICIVLGFFIVFLLILFC) threads the bilayer. The Cytoplasmic segment spans residues 206–233 (NLVIIHTLLRQPVKQQRNAEVRRRALWM). Residues 234–254 (VCTVLAVFVICFVPHHMVQLP) form a helical membrane-spanning segment. Residues 255 to 276 (WTLAELGMWPSSNHQAINDAHQ) lie on the Extracellular side of the membrane. Residues 277–296 (VTLCLLSTNCVLDPVIYCFL) form a helical membrane-spanning segment. At 297–342 (TKKFRKHLSEKLNIMRSSQKCSRVTTDTGTEMAIPINHTPVNPIKN) the chain is on the cytoplasmic side.

The protein belongs to the G-protein coupled receptor 1 family. In terms of assembly, interacts with ARRB1.

The protein localises to the cell membrane. Receptor for platelet activating factor, a chemotactic phospholipid mediator that possesses potent inflammatory, smooth-muscle contractile and hypotensive activity. Seems to mediate its action via a G protein that activates a phosphatidylinositol-calcium second messenger system. This chain is Platelet-activating factor receptor (PTAFR), found in Cavia porcellus (Guinea pig).